A 297-amino-acid polypeptide reads, in one-letter code: Formylmethanofuran--tetrahydromethanopterin formyltransferase (297 aa).

It belongs to the FTR family. As to quaternary structure, homotetramer.

The protein resides in the cytoplasm. The catalysed reaction is N-formylmethanofuran + 5,6,7,8-tetrahydromethanopterin + H(+) = N(5)-formyl-5,6,7,8-tetrahydromethanopterin + methanofuran. The protein operates within one-carbon metabolism; methanogenesis from CO(2); 5,10-methenyl-5,6,7,8-tetrahydromethanopterin from CO(2): step 2/3. Its function is as follows. Catalyzes the reversible transfer of a formyl group from formylmethanofuran (formyl-MFR) to tetrahydromethanopterin (H(4)MPT) to produce 5-formyl tetrahydromethanopterin (5-formyl-H(4)MPT) and methanofuran (MFR). In Methanosarcina mazei (strain ATCC BAA-159 / DSM 3647 / Goe1 / Go1 / JCM 11833 / OCM 88) (Methanosarcina frisia), this protein is Formylmethanofuran--tetrahydromethanopterin formyltransferase.